A 607-amino-acid chain; its full sequence is Guanine nucleotide-binding protein-like 1 (607 aa).

Over residues 1–14 (MPRKKPFSVKQKKK) the composition is skewed to basic residues. The disordered stretch occupies residues 1–81 (MPRKKPFSVK…GPRGYDPNRY (81 aa)). The segment covering 15 to 26 (QLQDKRERKRGL) has biased composition (basic and acidic residues). Phosphoserine occurs at positions 32, 33, and 34. Residues Thr48 and Thr50 each carry the phosphothreonine modification. Phosphoserine is present on residues Ser51 and Ser68. The CP-type G domain maps to 178–418 (WRQLWRVLEM…LCDCPGLIFP (241 aa)). 225–228 (NKVD) provides a ligand contact to GTP. The residue at position 324 (Ser324) is a Phosphoserine. GTP contacts are provided by residues 367-374 (GFPNVGKS) and 411-415 (DCPGL). Residues 544–607 (GRVGPAGDEE…PYALLGEDEC (64 aa)) form a disordered region. The segment covering 550–585 (GDEEEEEEEELSSSCEEEGEEDRDADEEGEGDEDTP) has biased composition (acidic residues). Residues Ser561, Ser562, and Ser563 each carry the phosphoserine modification.

Belongs to the TRAFAC class YlqF/YawG GTPase family.

In terms of biological role, possible regulatory or functional link with the histocompatibility cluster. The sequence is that of Guanine nucleotide-binding protein-like 1 (Gnl1) from Mus musculus (Mouse).